We begin with the raw amino-acid sequence, 255 residues long: 5'-nucleotidase SurE (255 aa).

A divalent metal cation is bound by residues aspartate 11, aspartate 12, serine 43, and asparagine 99.

Belongs to the SurE nucleotidase family. A divalent metal cation serves as cofactor.

Its subcellular location is the cytoplasm. It catalyses the reaction a ribonucleoside 5'-phosphate + H2O = a ribonucleoside + phosphate. Its function is as follows. Nucleotidase that shows phosphatase activity on nucleoside 5'-monophosphates. The polypeptide is 5'-nucleotidase SurE (Caldanaerobacter subterraneus subsp. tengcongensis (strain DSM 15242 / JCM 11007 / NBRC 100824 / MB4) (Thermoanaerobacter tengcongensis)).